The sequence spans 100 residues: Small ribosomal subunit protein uS14c (100 aa).

This sequence belongs to the universal ribosomal protein uS14 family. Part of the 30S ribosomal subunit.

The protein resides in the plastid. It is found in the chloroplast. In terms of biological role, binds 16S rRNA, required for the assembly of 30S particles. The protein is Small ribosomal subunit protein uS14c of Rhodomonas salina (Cryptomonas salina).